The sequence spans 216 residues: ATP phosphoribosyltransferase (216 aa).

It belongs to the ATP phosphoribosyltransferase family. Short subfamily. In terms of assembly, heteromultimer composed of HisG and HisZ subunits.

It localises to the cytoplasm. It catalyses the reaction 1-(5-phospho-beta-D-ribosyl)-ATP + diphosphate = 5-phospho-alpha-D-ribose 1-diphosphate + ATP. It participates in amino-acid biosynthesis; L-histidine biosynthesis; L-histidine from 5-phospho-alpha-D-ribose 1-diphosphate: step 1/9. Its function is as follows. Catalyzes the condensation of ATP and 5-phosphoribose 1-diphosphate to form N'-(5'-phosphoribosyl)-ATP (PR-ATP). Has a crucial role in the pathway because the rate of histidine biosynthesis seems to be controlled primarily by regulation of HisG enzymatic activity. In Rubrobacter xylanophilus (strain DSM 9941 / JCM 11954 / NBRC 16129 / PRD-1), this protein is ATP phosphoribosyltransferase.